A 42-amino-acid chain; its full sequence is Thymosin beta-10 (42 aa).

2 stretches are compositionally biased toward basic and acidic residues: residues 1–25 and 33–42; these read MADK…ETQE and ETIEQEKQAK. The interval 1-42 is disordered; the sequence is MADKPDMGEINSFDKAKLKKTETQEKNTLPTKETIEQEKQAK. N-acetylalanine is present on Ala-2. Lys-4 is subject to N6-acetyllysine. The residue at position 12 (Ser-12) is a Phosphoserine. Lys-15 carries the post-translational modification N6-acetyllysine. A phosphothreonine mark is found at Thr-21, Thr-23, and Thr-34. Position 39 is an N6-acetyllysine (Lys-39).

It belongs to the thymosin beta family.

The protein resides in the cytoplasm. The protein localises to the cytoskeleton. Plays an important role in the organization of the cytoskeleton. Binds to and sequesters actin monomers (G actin) and therefore inhibits actin polymerization. This chain is Thymosin beta-10 (TMSB10), found in Sus scrofa (Pig).